The sequence spans 562 residues: Dihydroxy-acid dehydratase (562 aa).

Residue aspartate 80 participates in Mg(2+) binding. Residue cysteine 121 coordinates [2Fe-2S] cluster. Mg(2+) contacts are provided by aspartate 122 and lysine 123. Residue lysine 123 is modified to N6-carboxylysine. Residue cysteine 194 participates in [2Fe-2S] cluster binding. Glutamate 446 contributes to the Mg(2+) binding site. The active-site Proton acceptor is serine 472.

It belongs to the IlvD/Edd family. Homodimer. The cofactor is [2Fe-2S] cluster. Mg(2+) is required as a cofactor.

The catalysed reaction is (2R)-2,3-dihydroxy-3-methylbutanoate = 3-methyl-2-oxobutanoate + H2O. It catalyses the reaction (2R,3R)-2,3-dihydroxy-3-methylpentanoate = (S)-3-methyl-2-oxopentanoate + H2O. It participates in amino-acid biosynthesis; L-isoleucine biosynthesis; L-isoleucine from 2-oxobutanoate: step 3/4. Its pathway is amino-acid biosynthesis; L-valine biosynthesis; L-valine from pyruvate: step 3/4. Functions in the biosynthesis of branched-chain amino acids. Catalyzes the dehydration of (2R,3R)-2,3-dihydroxy-3-methylpentanoate (2,3-dihydroxy-3-methylvalerate) into 2-oxo-3-methylpentanoate (2-oxo-3-methylvalerate) and of (2R)-2,3-dihydroxy-3-methylbutanoate (2,3-dihydroxyisovalerate) into 2-oxo-3-methylbutanoate (2-oxoisovalerate), the penultimate precursor to L-isoleucine and L-valine, respectively. The chain is Dihydroxy-acid dehydratase from Staphylococcus aureus (strain bovine RF122 / ET3-1).